Consider the following 444-residue polypeptide: Methylenetetrahydrofolate--tRNA-(uracil-5-)-methyltransferase TrmFO (444 aa).

FAD is bound at residue 10–15; the sequence is GAGLAG.

Belongs to the MnmG family. TrmFO subfamily. Requires FAD as cofactor.

The protein localises to the cytoplasm. It carries out the reaction uridine(54) in tRNA + (6R)-5,10-methylene-5,6,7,8-tetrahydrofolate + NADH + H(+) = 5-methyluridine(54) in tRNA + (6S)-5,6,7,8-tetrahydrofolate + NAD(+). The enzyme catalyses uridine(54) in tRNA + (6R)-5,10-methylene-5,6,7,8-tetrahydrofolate + NADPH + H(+) = 5-methyluridine(54) in tRNA + (6S)-5,6,7,8-tetrahydrofolate + NADP(+). Catalyzes the folate-dependent formation of 5-methyl-uridine at position 54 (M-5-U54) in all tRNAs. This Streptococcus pneumoniae serotype 4 (strain ATCC BAA-334 / TIGR4) protein is Methylenetetrahydrofolate--tRNA-(uracil-5-)-methyltransferase TrmFO.